The primary structure comprises 436 residues: Glutamate-1-semialdehyde 2,1-aminomutase (436 aa).

Lysine 270 carries the post-translational modification N6-(pyridoxal phosphate)lysine.

The protein belongs to the class-III pyridoxal-phosphate-dependent aminotransferase family. HemL subfamily. Homodimer. Requires pyridoxal 5'-phosphate as cofactor.

The protein resides in the cytoplasm. It carries out the reaction (S)-4-amino-5-oxopentanoate = 5-aminolevulinate. It participates in porphyrin-containing compound metabolism; protoporphyrin-IX biosynthesis; 5-aminolevulinate from L-glutamyl-tRNA(Glu): step 2/2. The chain is Glutamate-1-semialdehyde 2,1-aminomutase from Cutibacterium acnes (strain DSM 16379 / KPA171202) (Propionibacterium acnes).